The sequence spans 255 residues: NAD-dependent protein deacylase (255 aa).

The 253-residue stretch at 1-253 (MIEEAPRIIA…VKVKRCLENK (253 aa)) folds into the Deacetylase sirtuin-type domain. Residue 20–39 (GAGVSAESGIPTFRDRGGLW) coordinates NAD(+). Substrate contacts are provided by tyrosine 64 and arginine 67. NAD(+) is bound at residue 98–101 (QNID). The active-site Proton acceptor is histidine 116. Positions 124, 127, 151, and 154 each coordinate Zn(2+). Residues 191 to 193 (GTS), 217 to 219 (NTK), and alanine 235 each bind NAD(+).

This sequence belongs to the sirtuin family. Class III subfamily. Zn(2+) serves as cofactor.

The protein resides in the cytoplasm. The enzyme catalyses N(6)-acetyl-L-lysyl-[protein] + NAD(+) + H2O = 2''-O-acetyl-ADP-D-ribose + nicotinamide + L-lysyl-[protein]. The catalysed reaction is N(6)-succinyl-L-lysyl-[protein] + NAD(+) + H2O = 2''-O-succinyl-ADP-D-ribose + nicotinamide + L-lysyl-[protein]. Its function is as follows. NAD-dependent lysine deacetylase and desuccinylase that specifically removes acetyl and succinyl groups on target proteins. Modulates the activities of several proteins which are inactive in their acylated form. Deacetylates the N-terminal lysine residue of Alba, the major archaeal chromatin protein and that, in turn, increases Alba's DNA binding affinity, thereby repressing transcription. This is NAD-dependent protein deacylase from Thermococcus sibiricus (strain DSM 12597 / MM 739).